Consider the following 1827-residue polypeptide: Phenolphthiocerol/phthiocerol polyketide synthase subunit C (1827 aa).

In terms of domain architecture, Ketosynthase family 3 (KS3) spans 35–461 (CEPVAVVGIG…GTNAHVVVEQ (427 aa)). Active-site for beta-ketoacyl synthase activity residues include cysteine 207, histidine 342, and histidine 383. An acyltransferase region spans residues 566-876 (VFVYSGQGSQ…LAAVGVAASE (311 aa)). Serine 654 serves as the catalytic For malonyltransferase activity. The segment at 910-1037 (HPLLGAHIEM…AKVEQSPREC (128 aa)) is N-terminal hotdog fold. Residues 910 to 1076 (HPLLGAHIEM…QHHGPAFAAL (167 aa)) are dehydratase. The 289-residue stretch at 910–1198 (HPLLGAHIEM…LRRVERRAVP (289 aa)) folds into the PKS/mFAS DH domain. Residue histidine 942 is the Proton acceptor; for dehydratase activity of the active site. A C-terminal hotdog fold region spans residues 1050–1198 (GTTVSPADFY…LRRVERRAVP (149 aa)). The Proton donor; for dehydratase activity role is filled by aspartate 1111. A beta-ketoacyl reductase region spans residues 1439–1617 (ASYVVTGGLG…VINWGPWSEV (179 aa)). 1440–1485 (SYVVTGGLGGLGLVVARWLVDRGAGRVVLGGRSDPTDEQCNVLAEL) contacts NADP(+). A Carrier domain is found at 1706-1785 (RAVTERMCAR…DLTADLMRQL (80 aa)). The residue at position 1745 (serine 1745) is an O-(pantetheine 4'-phosphoryl)serine.

The cofactor is NADP(+). Pantetheine 4'-phosphate is required as a cofactor.

The enzyme catalyses icosanoyl-[(phenol)carboxyphthiodiolenone synthase] + 2 (S)-methylmalonyl-CoA + 3 malonyl-CoA + 5 NADPH + 10 H(+) = C32-carboxyphthiodiolenone-[(phenol)carboxyphthiodiolenone synthase] + 5 CO2 + 5 NADP(+) + 5 CoA + 2 H2O. It carries out the reaction docosanoyl-[(phenol)carboxyphthiodiolenone synthase] + 2 (S)-methylmalonyl-CoA + 3 malonyl-CoA + 5 NADPH + 10 H(+) = C34-carboxyphthiodiolenone-[(phenol)carboxyphthiodiolenone synthase] + 5 CO2 + 5 NADP(+) + 5 CoA + 2 H2O. It catalyses the reaction 17-(4-hydroxyphenyl)heptadecanoyl-[(phenol)carboxyphthiodiolenone synthase] + 2 (S)-methylmalonyl-CoA + 3 malonyl-CoA + 5 NADPH + 10 H(+) = C35-(phenol)carboxyphthiodiolenone-[(phenol)carboxyphthiodiolenone synthase] + 5 CO2 + 5 NADP(+) + 5 CoA + 2 H2O. The catalysed reaction is 19-(4-hydroxyphenyl)nonadecanoyl-[(phenol)carboxyphthiodiolenone synthase] + 2 (S)-methylmalonyl-CoA + 3 malonyl-CoA + 5 NADPH + 10 H(+) = C37-(phenol)carboxyphthiodiolenone-[(phenol)carboxyphthiodiolenone synthase] + 5 CO2 + 5 NADP(+) + 5 CoA + 2 H2O. Its pathway is lipid metabolism; fatty acid biosynthesis. Functionally, part of the PpsABCDE complex involved in the biosynthesis of the lipid core common to phthiocerols and phenolphthiocerols by successive additions of malonyl-CoA or methylmalonyl-CoA extender units. PpsA can accept as substrate the activated forms of either icosanoyl (C20), docosanoyl (C22) or lignoceroyl (C24) groups from FadD26, or a (4-hydroxyphenyl)-C17 or (4-hydroxyphenyl)-C19 fatty acyl from FadD29. PpsA initiates the biosynthesis and extends its substrate using a malonyl-CoA extender unit. The PpsB and PpsC proteins add the second and third malonyl-CoA extender units. PpsD adds an (R)-methylmalonyl unit and PpsE adds a second (R)-methylmalonyl unit. The incorporation of the methylmalonyl units results in formation of two branched methyl groups in the elongated product. This is Phenolphthiocerol/phthiocerol polyketide synthase subunit C (ppsD) from Mycobacterium bovis (strain ATCC BAA-935 / AF2122/97).